The following is a 128-amino-acid chain: 2-iminobutanoate/2-iminopropanoate deaminase (128 aa).

Substrate is bound at residue arginine 105.

Belongs to the RutC family. In terms of assembly, homotrimer.

The protein localises to the cytoplasm. It carries out the reaction 2-iminobutanoate + H2O = 2-oxobutanoate + NH4(+). The catalysed reaction is 2-iminopropanoate + H2O = pyruvate + NH4(+). The protein operates within amino-acid biosynthesis; L-isoleucine biosynthesis; 2-oxobutanoate from L-threonine. In terms of biological role, accelerates the release of ammonia from reactive enamine/imine intermediates of the PLP-dependent threonine dehydratase (IlvA) in the low water environment of the cell. It catalyzes the deamination of enamine/imine intermediates to yield 2-ketobutyrate and ammonia. It is required for the detoxification of reactive intermediates of IlvA due to their highly nucleophilic abilities and to avoid they are captured by anthranilate phosphoribosyltransferase (TrpD) to generate PRA, an intermediate in the alternative pyrimidine biosynthetic (APB) pathway. Also required for full activity of IlvE which is involved in the isoleucine biosynthesis. RidA also accelerates the release of pyruvate produced by IlvA from L-serine. This is 2-iminobutanoate/2-iminopropanoate deaminase from Salmonella typhimurium (strain LT2 / SGSC1412 / ATCC 700720).